The primary structure comprises 331 residues: Protein PER1 homolog (331 aa).

Positions 1–24 (MRVLRNFTIFFLFTALSLFRQISA) are cleaved as a signal peptide. The Lumenal segment spans residues 25 to 100 (SAGDLHPVYV…QYHGKWYFIR (76 aa)). Residues 101–121 (VFGIQELFSVFFSMLNFMIHY) traverse the membrane as a helical segment. The Cytoplasmic segment spans residues 122–139 (NGYHIMRRCIPDEHPAKR). A helical membrane pass occupies residues 140-160 (LCLSWAIVGMNAWVWSSVFHI). Residues 161 to 168 (RDTPITEK) lie on the Lumenal side of the membrane. The chain crosses the membrane as a helical span at residues 169-189 (LDYFSAGAFVLFGSYCTLILM). Over 190–199 (LRLDQLPGGK) the chain is Cytoplasmic. A helical membrane pass occupies residues 200 to 220 (LLCWIIGVIFIAAFIAHVSYL). Topologically, residues 221–232 (SFYSFDYGYNMK) are lumenal. Residues 233 to 250 (ANVAVGLVQNILWYYYSW) traverse the membrane as a helical segment. Residues 251-263 (SNRNSGLYWTRWP) are Cytoplasmic-facing. A helical transmembrane segment spans residues 264–284 (AYIVTSLMLATSLELFDFSPI). The Lumenal portion of the chain corresponds to 285 to 289 (ANLID). A helical membrane pass occupies residues 290–310 (AHALWHLSTVPITHYLYGFVV). Residues 311–331 (RKCSYDLTKGTFKIKAYDSSR) lie on the Cytoplasmic side of the membrane.

Belongs to the PGAP3/PER1 family.

The protein localises to the endoplasmic reticulum membrane. The protein resides in the vacuole membrane. In terms of biological role, involved in the lipid remodeling steps of GPI-anchor maturation. Lipid remodeling steps consist in the generation of 2 saturated fatty chains at the sn-2 position of GPI-anchors proteins. Required for phospholipase A2 activity that removes an acyl-chain at the sn-2 position of GPI-anchors during the remodeling of GPI. Required for efficient transport of GPI-anchor proteins. The chain is Protein PER1 homolog from Schizosaccharomyces pombe (strain 972 / ATCC 24843) (Fission yeast).